A 178-amino-acid chain; its full sequence is Large ribosomal subunit protein uL6 (178 aa).

Belongs to the universal ribosomal protein uL6 family. In terms of assembly, part of the 50S ribosomal subunit.

Functionally, this protein binds to the 23S rRNA, and is important in its secondary structure. It is located near the subunit interface in the base of the L7/L12 stalk, and near the tRNA binding site of the peptidyltransferase center. This Natranaerobius thermophilus (strain ATCC BAA-1301 / DSM 18059 / JW/NM-WN-LF) protein is Large ribosomal subunit protein uL6.